Here is a 351-residue protein sequence, read N- to C-terminus: Anthranilate phosphoribosyltransferase (351 aa).

Residues Gly-89, 92–93 (GD), Thr-97, 99–102 (NIST), 117–125 (KHGNRSASG), and Ser-129 contribute to the 5-phospho-alpha-D-ribose 1-diphosphate site. Gly-89 provides a ligand contact to anthranilate. Ser-101 lines the Mg(2+) pocket. Asn-120 is an anthranilate binding site. Arg-175 provides a ligand contact to anthranilate. Residues Asp-234 and Glu-235 each coordinate Mg(2+).

Belongs to the anthranilate phosphoribosyltransferase family. As to quaternary structure, homodimer. Mg(2+) is required as a cofactor.

It carries out the reaction N-(5-phospho-beta-D-ribosyl)anthranilate + diphosphate = 5-phospho-alpha-D-ribose 1-diphosphate + anthranilate. Its pathway is amino-acid biosynthesis; L-tryptophan biosynthesis; L-tryptophan from chorismate: step 2/5. Functionally, catalyzes the transfer of the phosphoribosyl group of 5-phosphorylribose-1-pyrophosphate (PRPP) to anthranilate to yield N-(5'-phosphoribosyl)-anthranilate (PRA). The chain is Anthranilate phosphoribosyltransferase from Synechococcus sp. (strain CC9902).